A 60-amino-acid polypeptide reads, in one-letter code: Ribosome biogenesis protein Nop10 (60 aa).

A disordered region spans residues 37 to 60; sequence APAPFDPADPHGKYRRALKERRRL. Over residues 49 to 60 the composition is skewed to basic residues; that stretch reads KYRRALKERRRL.

It belongs to the NOP10 family.

Involved in ribosome biogenesis; more specifically in 18S rRNA pseudouridylation and in cleavage of pre-rRNA. This is Ribosome biogenesis protein Nop10 from Halobacterium salinarum (strain ATCC 29341 / DSM 671 / R1).